The following is a 46-amino-acid chain: Pape peptide (46 aa).

The span at 1–10 shows a compositional bias: low complexity; that stretch reads KQLLKEALAP. The interval 1-46 is disordered; the sequence is KQLLKEALAPEPAPKPAPEPAPEPAPEPAPEAAPEPAAAAPEAAPE. Residues 11-33 show a composition bias toward pro residues; it reads EPAPKPAPEPAPEPAPEPAPEAA. 4 PAPE repeats span residues 16–19, 20–23, 24–27, and 28–31; these read PAPE. The segment covering 34–46 has biased composition (low complexity); sequence PEPAAAAPEAAPE.

As to expression, expressed by the venom gland.

The protein resides in the secreted. The chain is Pape peptide from Tityus stigmurus (Brazilian scorpion).